The chain runs to 104 residues: L-rhamnose mutarotase (104 aa).

Position 18 (tyrosine 18) interacts with substrate. The active-site Proton donor is histidine 22. Substrate-binding positions include tyrosine 41 and 76 to 77 (WW).

This sequence belongs to the rhamnose mutarotase family. In terms of assembly, homodimer.

It is found in the cytoplasm. The catalysed reaction is alpha-L-rhamnose = beta-L-rhamnose. It functions in the pathway carbohydrate metabolism; L-rhamnose metabolism. In terms of biological role, involved in the anomeric conversion of L-rhamnose. The chain is L-rhamnose mutarotase from Bacillus subtilis (strain 168).